The following is a 361-amino-acid chain: Free fatty acid receptor 4 (361 aa).

The disordered stretch occupies residues 1 to 21 (MSPECAQTTGPGPSRTPDQVN). Topologically, residues 1–45 (MSPECAQTTGPGPSRTPDQVNRTHFPFFSDVKGDHRLVLSVLETT) are extracellular. Residue N21 is glycosylated (N-linked (GlcNAc...) asparagine). The chain crosses the membrane as a helical span at residues 46–66 (VLGLIFVVSLLGNVCALVLVV). At 67–77 (RRRRRGATVSL) the chain is on the cytoplasmic side. Residues 78–98 (VLNLFCADLLFTSAIPLVLVV) traverse the membrane as a helical segment. Residues 99–103 (RWTEA) lie on the Extracellular side of the membrane. The helical transmembrane segment at 104 to 124 (WLLGPVVCHLLFYVMTMSGSV) threads the bilayer. An intrachain disulfide couples C111 to C194. The Cytoplasmic segment spans residues 125–156 (TILTLAAVSLERMVCIVRLRRGLSGPGRRTQA). A helical transmembrane segment spans residues 157 to 177 (ALLAFIWGYSALAALPLCILF). Residues 178–204 (RVVPQRLPGGDQEIPICTLDWPNRIGE) are Extracellular-facing. Residues 205–225 (ISWDVFFVTLNFLVPGLVIVI) form a helical membrane-spanning segment. At 226 to 268 (SYSKILQITKASRKRLTLSLAYSESHQIRVSQQDYRLFRTLFL) the chain is on the cytoplasmic side. A helical transmembrane segment spans residues 269 to 289 (LMVSFFIMWSPIIITILLILI). The Extracellular portion of the chain corresponds to 290–295 (QNFRQD). Residues 296 to 316 (LVIWPSLFFWVVAFTFANSAL) form a helical membrane-spanning segment. The Cytoplasmic portion of the chain corresponds to 317–361 (NPILYNMSLFRSEWRKIFCCFFFPEKGAIFTETSIRRNDLSVIST). Phosphothreonine is present on residues T347 and T349. Residues S350, S357, and S360 each carry the phosphoserine modification.

The protein belongs to the G-protein coupled receptor 1 family. Interacts (via C-terminus) with ARRB2 following LCFAs stimulation. Post-translationally, phosphorylated at two clusters of Ser and Thr residues located in the intracellular C-terminus. Prerequisite for FFAR4 internalization via an ARRB2-dependent pathway.

The protein resides in the cell membrane. The protein localises to the endosome membrane. It localises to the lysosome membrane. It is found in the cell projection. Its subcellular location is the cilium membrane. In terms of biological role, G-protein-coupled receptor for long-chain fatty acids (LCFAs) with a major role in adipogenesis, energy metabolism and inflammation. Signals via G-protein and beta-arrestin pathways. LCFAs sensing initiates activation of phosphoinositidase C-linked G proteins GNAQ and GNA11 (G(q)/G(11)), inducing a variety of cellular responses via second messenger pathways such as intracellular calcium mobilization, modulation of cyclic adenosine monophosphate (cAMP) production, and mitogen-activated protein kinases (MAPKs). After LCFAs binding, associates with beta-arrestin ARRB2 that acts as an adapter protein coupling the receptor to specific downstream signaling pathways, as well as mediating receptor endocytosis. In response to dietary fats, plays an important role in the regulation of adipocyte proliferation and differentiation. Acts as a receptor for omega-3 polyunsaturated fatty acids (PUFAs) at primary cilium of perivascular preadipocytes, initiating an adipogenic program via cAMP and CTCF-dependent chromatin remodeling that ultimately results in transcriptional activation of adipogenic genes and cell cycle entry. Induces differentiation of brown and beige adipocytes probably via autocrine and endocrine functions of FGF21 hormone. Contributes to the thermogenic activation of brown adipose tissue and the browning of white adipose tissue. Activates brown adipocytes by initiating intracellular calcium signaling leading to mitochondrial depolarization and fission, and overall increased mitochondrial respiration. Consequently stimulates fatty acid uptake and oxidation in mitochondria together with UCP1-mediated thermogenic respiration, eventually reducing fat mass. Regulates bi-potential differentiation of bone marrow mesenchymal stem cells toward osteoblasts or adipocytes likely by up-regulating distinct integrins. In response to dietary fats regulates hormone secretion and appetite. Stimulates GIP and GLP1 secretion from enteroendocrine cells as well as GCG secretion in pancreatic alpha cells, thereby playing a role in the regulation of blood glucose levels. Negatively regulates glucose-induced SST secretion in pancreatic delta cells. Mediates LCFAs inhibition of GHRL secretion, an appetite-controlling hormone. In taste buds, contributes to sensing of dietary fatty acids by the gustatory system. During the inflammatory response, promotes anti-inflammatory M2 macrophage differentiation in adipose tissue. Mediates the anti-inflammatory effects of omega-3 PUFAs via inhibition of NLRP3 inflammasome activation. In this pathway, interacts with adapter protein ARRB2 and inhibits the priming step triggered by Toll-like receptors (TLRs) at the level of TAK1 and TAB1. Further inhibits the activation step when ARRB2 directly associates with NLRP3, leading to inhibition of pro-inflammatory cytokine release. Mediates LCFAs anti-apoptotic effects. The chain is Free fatty acid receptor 4 (Ffar4) from Rattus norvegicus (Rat).